The sequence spans 684 residues: Histone-lysine N-methyltransferase SETMAR (684 aa).

Residues 1–345 (MFAEAAKTTR…RLTLETMKMM (345 aa)) form a histone-lysine N-methyltransferase region. In terms of domain architecture, Pre-SET spans 73–136 (PGCICVKTPC…HCRNRVVQKG (64 aa)). 9 residues coordinate Zn(2+): Cys-75, Cys-77, Cys-82, Cys-87, Cys-89, Cys-118, Cys-122, Cys-124, and Cys-128. In terms of domain architecture, SET spans 139-263 (FHFQVFKTHK…PEEELSYDYS (125 aa)). Residues 149 to 151 (KGW), Tyr-192, Arg-220, and 223 to 224 (NH) contribute to the S-adenosyl-L-methionine site. Zn(2+) is bound by residues Cys-226, Cys-287, Cys-289, and Cys-294. A Post-SET domain is found at 283–299 (LRKPCYCGAKSCTAFLP). The mariner transposase Hsmar1 stretch occupies residues 346–684 (LDKKQIRAIF…CVDCNGSYFD (339 aa)). 2 consecutive DNA-binding regions (H-T-H motif) follow at residues 364 to 395 (KAAE…KFCK) and 428 to 448 (TTRE…RHLK). Position 496 (Asp-496) interacts with Mg(2+). N6-methyllysine is present on Lys-498. The residue at position 508 (Ser-508) is a Phosphoserine; by CHEK1. Mg(2+) is bound at residue Asp-588.

In the N-terminal section; belongs to the class V-like SAM-binding methyltransferase superfamily. This sequence in the C-terminal section; belongs to the mariner transposase family. In terms of assembly, homodimer. Interacts with PRPF19; required for SETMAR recruitment to damaged DNA sites. Interacts with PCNA. Interacts with TOP2A; stimulates TOP2A topoisomerase activity. May interact with RAD9A and/or RAD9B. Requires Mg(2+) as cofactor. Methylated. Methylation regulates activity in DNA decatenation. Post-translationally, phosphorylated at Ser-508 by CHEK1 and dephosphorylated by protein phosphatase 2A/PP2A. Phosphorylation at Ser-508 is enhanced by DNA damage and promotes recruitment to damaged DNA. It stimulates DNA repair and impairs replication fork restart. As to expression, widely expressed, with highest expression in placenta and ovary and lowest expression in skeletal muscle.

It is found in the nucleus. It localises to the chromosome. It catalyses the reaction L-lysyl(36)-[histone H3] + 2 S-adenosyl-L-methionine = N(6),N(6)-dimethyl-L-lysyl(36)-[histone H3] + 2 S-adenosyl-L-homocysteine + 2 H(+). Protein derived from the fusion of a methylase with the transposase of an Hsmar1 transposon that plays a role in DNA double-strand break repair, stalled replication fork restart and DNA integration. DNA-binding protein, it is indirectly recruited to sites of DNA damage through protein-protein interactions. Also has kept a sequence-specific DNA-binding activity recognizing the 19-mer core of the 5'-terminal inverted repeats (TIRs) of the Hsmar1 element and displays a DNA nicking and end joining activity. In parallel, has a histone methyltransferase activity and methylates 'Lys-4' and 'Lys-36' of histone H3. Specifically mediates dimethylation of H3 'Lys-36' at sites of DNA double-strand break and may recruit proteins required for efficient DSB repair through non-homologous end-joining. Also regulates replication fork processing, promoting replication fork restart and regulating DNA decatenation through stimulation of the topoisomerase activity of TOP2A. In Homo sapiens (Human), this protein is Histone-lysine N-methyltransferase SETMAR.